Consider the following 212-residue polypeptide: tRNA (guanine-N(7)-)-methyltransferase (212 aa).

The S-adenosyl-L-methionine site is built by Glu-44, Asp-69, Asp-96, and Asp-118. Residue Asp-118 is part of the active site. Lys-122 provides a ligand contact to substrate. The tract at residues 124–129 (RHEKRR) is interaction with RNA. Substrate is bound by residues Asp-154 and 191–194 (TEYE).

Belongs to the class I-like SAM-binding methyltransferase superfamily. TrmB family.

It carries out the reaction guanosine(46) in tRNA + S-adenosyl-L-methionine = N(7)-methylguanosine(46) in tRNA + S-adenosyl-L-homocysteine. Its pathway is tRNA modification; N(7)-methylguanine-tRNA biosynthesis. Functionally, catalyzes the formation of N(7)-methylguanine at position 46 (m7G46) in tRNA. This is tRNA (guanine-N(7)-)-methyltransferase from Streptococcus gordonii (strain Challis / ATCC 35105 / BCRC 15272 / CH1 / DL1 / V288).